Here is a 151-residue protein sequence, read N- to C-terminus: Large ribosomal subunit protein uL13 (151 aa).

Belongs to the universal ribosomal protein uL13 family. In terms of assembly, part of the 50S ribosomal subunit.

This protein is one of the early assembly proteins of the 50S ribosomal subunit, although it is not seen to bind rRNA by itself. It is important during the early stages of 50S assembly. This Synechococcus sp. (strain JA-3-3Ab) (Cyanobacteria bacterium Yellowstone A-Prime) protein is Large ribosomal subunit protein uL13.